Reading from the N-terminus, the 568-residue chain is PTS system lactose-specific EIICB component (568 aa).

Positions 8–409 constitute a PTS EIIC type-3 domain; the sequence is IEKGKPFFEK…LVDTVIYYPF (402 aa). 10 consecutive transmembrane segments (helical) span residues 30–50, 65–85, 103–123, 128–148, 183–203, 222–242, 246–266, 283–303, 339–359, and 381–401; these read GFIS…IAYV, MLMT…AGTT, INFI…AADP, GFLS…AAFI, FAFS…VIGV, GYLG…VGIH, IVEP…AHLI, FIVT…FMWL, VFFI…KFFV, and IVLG…LILV. Residues 465–568 enclose the PTS EIIB type-3 domain; sequence ETNVLVLCAG…LAFVEEQFKD (104 aa). Residue Cys472 is the Phosphocysteine intermediate; for EIIB activity of the active site. At Cys472 the chain carries Phosphocysteine; by EIIA.

The protein resides in the cell membrane. The enzyme catalyses lactose(out) + N(pros)-phospho-L-histidyl-[protein] = lactose 6-phosphate(in) + L-histidyl-[protein]. Its function is as follows. The phosphoenolpyruvate-dependent sugar phosphotransferase system (sugar PTS), a major carbohydrate active transport system, catalyzes the phosphorylation of incoming sugar substrates concomitantly with their translocation across the cell membrane. The enzyme II LacEF PTS system is involved in lactose transport. In Streptococcus mutans serotype c (strain ATCC 700610 / UA159), this protein is PTS system lactose-specific EIICB component.